Here is a 276-residue protein sequence, read N- to C-terminus: Phosphonoacetaldehyde hydrolase (276 aa).

Aspartate 19 (nucleophile) is an active-site residue. Residues aspartate 19 and alanine 21 each coordinate Mg(2+). The active-site Schiff-base intermediate with substrate is lysine 60. Aspartate 193 contacts Mg(2+).

It belongs to the HAD-like hydrolase superfamily. PhnX family. In terms of assembly, homodimer. Mg(2+) serves as cofactor.

The enzyme catalyses phosphonoacetaldehyde + H2O = acetaldehyde + phosphate + H(+). Its function is as follows. Involved in phosphonate degradation. This chain is Phosphonoacetaldehyde hydrolase, found in Bordetella bronchiseptica (strain ATCC BAA-588 / NCTC 13252 / RB50) (Alcaligenes bronchisepticus).